The following is a 514-amino-acid chain: Probable outer membrane protein pmp12 (514 aa).

Positions 1–21 (MTILRNFLTCSALFLALPAAA) are cleaved as a signal peptide.

This sequence belongs to the PMP outer membrane protein family.

It is found in the secreted. The protein resides in the cell wall. Its subcellular location is the cell outer membrane. This Chlamydia pneumoniae (Chlamydophila pneumoniae) protein is Probable outer membrane protein pmp12 (pmp12).